Here is a 229-residue protein sequence, read N- to C-terminus: 2,3-bisphosphoglycerate-dependent phosphoglycerate mutase (229 aa).

Residues 7–14 (RHGQSEWN), 20–21 (TG), Arg59, 86–89 (ERHY), Lys97, 113–114 (RR), and 182–183 (GN) each bind substrate. His8 (tele-phosphohistidine intermediate) is an active-site residue. Catalysis depends on Glu86, which acts as the Proton donor/acceptor.

It belongs to the phosphoglycerate mutase family. BPG-dependent PGAM subfamily.

It carries out the reaction (2R)-2-phosphoglycerate = (2R)-3-phosphoglycerate. Its pathway is carbohydrate degradation; glycolysis; pyruvate from D-glyceraldehyde 3-phosphate: step 3/5. Its function is as follows. Catalyzes the interconversion of 2-phosphoglycerate and 3-phosphoglycerate. The chain is 2,3-bisphosphoglycerate-dependent phosphoglycerate mutase from Listeria monocytogenes serotype 4a (strain HCC23).